A 673-amino-acid chain; its full sequence is Auxin response factor 9 (673 aa).

The segment at residues 126 to 228 is a DNA-binding region (TF-B3); that stretch reads FCKTLTASDT…ELRVGVRRLM (103 aa). Disordered regions lie at residues 356–386 and 514–545; these read ELEP…PSVV and DSDQ…QSRQ. The segment covering 516-545 has biased composition (polar residues); that stretch reads DQISQPSNGNKSDAPGTSSERSPLESQSRQ. Residues 547–639 form the PB1 domain; it reads RSCTKVIMQG…EEAKLLAPKS (93 aa).

It belongs to the ARF family. In terms of assembly, homodimers and heterodimers. Expressed in roots, culms, leaves and young panicles.

The protein resides in the nucleus. Its function is as follows. Auxin response factors (ARFs) are transcriptional factors that bind specifically to the DNA sequence 5'-TGTCTC-3' found in the auxin-responsive promoter elements (AuxREs). The protein is Auxin response factor 9 (ARF9) of Oryza sativa subsp. japonica (Rice).